We begin with the raw amino-acid sequence, 485 residues long: Subtilisin-like protease 1 (485 aa).

Positions 1–19 are cleaved as a signal peptide; sequence MGIFRFISISLAAVSAANA. A propeptide spanning residues 20–116 is cleaved from the precursor; sequence GHILSMGHAK…VEPDTTITIH (97 aa). An Inhibitor I9 domain is found at 34 to 116; it reads SYIVVMKDGT…VEPDTTITIH (83 aa). A Peptidase S8 domain is found at 126–400; sequence SWGLARISSQ…NILINNGDAK (275 aa). Active-site charge relay system residues include Asp-158 and His-190. Asn-251 is a glycosylation site (N-linked (GlcNAc...) asparagine). The active-site Charge relay system is Ser-345. Residues 377 to 394 show a composition bias toward polar residues; that stretch reads GTSSVTNPGPGTRTNILI. Residues 377–462 are disordered; the sequence is GTSSVTNPGP…HTPFPNDDFN (86 aa). Over residues 409 to 418 the composition is skewed to pro residues; sequence PSQPPKPSQP. The span at 419 to 428 shows a compositional bias: low complexity; the sequence is SKPQQPSEPQ. Residues 433–455 show a composition bias toward pro residues; it reads PQEPAPGQPAPAPAPVPQHPHTP.

It belongs to the peptidase S8 family.

It localises to the secreted. Functionally, secreted subtilisin-like serine protease with keratinolytic activity that contributes to pathogenicity. The chain is Subtilisin-like protease 1 (SUB1) from Arthroderma otae (strain ATCC MYA-4605 / CBS 113480) (Microsporum canis).